The following is a 174-amino-acid chain: Centrosomal protein 20 (174 aa).

The segment at Met1–Ile104 is necessary and sufficient for homooligomerization and localization to centrosomes and pericentriolar satellites. In terms of domain architecture, LisH spans Glu49–Val81. The interval Gly129–Arg174 is disordered. Phosphoserine is present on Ser144. Over residues Lys147–His167 the composition is skewed to basic and acidic residues.

Belongs to the CEP43 family. In terms of assembly, homooligomer; probably required for localization to centrosomes. Forms a complex with KIAA0753/OFIP and OFD1; within this complex may stabilize the interaction between OFD1 and KIAA0753/OFIP. Interacts with PCM1; this interaction may be mediated by KIAA0753/OFIP. Interacts with PLK1 in later G1, S, G2 and M phases of the cell cycle; this interaction recruits PLK1 to centrosomes. As to expression, widely expressed. Detected in brain, heart, kidney, liver, lung, skeletal muscle, placenta and intestine.

The protein localises to the cytoplasm. Its subcellular location is the cytoskeleton. It localises to the microtubule organizing center. The protein resides in the centrosome. It is found in the centriole. The protein localises to the cell projection. Its subcellular location is the cilium. It localises to the cilium basal body. The protein resides in the cytoplasmic granule. It is found in the centriolar satellite. In terms of biological role, involved in the biogenesis of cilia. Required for the recruitment of PLK1 to centrosomes and S phase progression. This Homo sapiens (Human) protein is Centrosomal protein 20.